Consider the following 280-residue polypeptide: UPF0494 membrane protein SPAC212.01c (280 aa).

A run of 4 helical transmembrane segments spans residues 107–127 (WPLL…KFEV), 144–164 (IWVP…SLIF), 178–198 (VIIA…GMII), and 199–219 (AALG…LYFG).

This sequence belongs to the UPF0494 family.

The protein localises to the membrane. This is UPF0494 membrane protein SPAC212.01c from Schizosaccharomyces pombe (strain 972 / ATCC 24843) (Fission yeast).